The following is a 320-amino-acid chain: Beta-ketoacyl-[acyl-carrier-protein] synthase III (320 aa).

Catalysis depends on residues Cys114 and His247. An ACP-binding region spans residues 248-252; it reads QANRR. Asn277 is a catalytic residue.

The protein belongs to the thiolase-like superfamily. FabH family. As to quaternary structure, homodimer.

It is found in the cytoplasm. It carries out the reaction malonyl-[ACP] + acetyl-CoA + H(+) = 3-oxobutanoyl-[ACP] + CO2 + CoA. The protein operates within lipid metabolism; fatty acid biosynthesis. Catalyzes the condensation reaction of fatty acid synthesis by the addition to an acyl acceptor of two carbons from malonyl-ACP. Catalyzes the first condensation reaction which initiates fatty acid synthesis and may therefore play a role in governing the total rate of fatty acid production. Possesses both acetoacetyl-ACP synthase and acetyl transacylase activities. Its substrate specificity determines the biosynthesis of branched-chain and/or straight-chain of fatty acids. This is Beta-ketoacyl-[acyl-carrier-protein] synthase III from Neisseria meningitidis serogroup A / serotype 4A (strain DSM 15465 / Z2491).